The chain runs to 226 residues: Putative methyltransferase RP459 (226 aa).

It belongs to the methyltransferase superfamily.

In Rickettsia prowazekii (strain Madrid E), this protein is Putative methyltransferase RP459.